The chain runs to 65 residues: Ovary maturating parsin (65 aa).

The segment covering 17–28 (PAAPAVAPAAPA) has biased composition (low complexity). The disordered stretch occupies residues 17–36 (PAAPAVAPAAPASWPHQQRR).

In terms of assembly, monomer.

In terms of biological role, neurohormone that anticipates ovarian maturation. Acts as a true gonadotropin and stimulates vitellogenin biosynthesis. In Locusta migratoria (Migratory locust), this protein is Ovary maturating parsin.